The chain runs to 444 residues: Multidrug resistance protein MdtA (444 aa).

A signal peptide spans 1–20 (MKSQSKRTSRLFVFVGVVVA). Polar residues predominate over residues 37-52 (NNTSGAQQSARGQDTS). 2 disordered regions span residues 37 to 60 (NNTS…RNTP) and 398 to 444 (TPRS…AEKS). Residues 409–419 (ASAEKAAAEAE) show a composition bias toward low complexity. The span at 435 to 444 (ARSTTAAEKS) shows a compositional bias: polar residues.

It belongs to the membrane fusion protein (MFP) (TC 8.A.1) family. As to quaternary structure, part of a tripartite efflux system composed of MdtA, MdtB and MdtC.

The protein localises to the cell inner membrane. This is Multidrug resistance protein MdtA from Yersinia pseudotuberculosis serotype O:3 (strain YPIII).